The primary structure comprises 255 residues: Gene 54 protein (255 aa).

This is Gene 54 protein (54) from Mycobacterium phage D29 (Mycobacteriophage D29).